The sequence spans 615 residues: Proteasome-associated ATPase (615 aa).

The segment at 1–27 is disordered; it reads MSESERSEASEVFGTSPDSRLSSEDAA. Residues 22-99 adopt a coiled-coil conformation; it reads SSEDAAELEQ…LREEVDRLGQ (78 aa). 302-307 is a binding site for ATP; that stretch reads GCGKTL. The interval 614 to 615 is docks into pockets in the proteasome alpha-ring; sequence YL.

Belongs to the AAA ATPase family. In terms of assembly, homohexamer. Assembles into a hexameric ring structure that caps the 20S proteasome core. Strongly interacts with the prokaryotic ubiquitin-like protein Pup through a hydrophobic interface; the interacting region of ARC lies in its N-terminal coiled-coil domain. There is one Pup binding site per ARC hexamer ring. Upon ATP-binding, the C-terminus of ARC interacts with the alpha-rings of the proteasome core, possibly by binding to the intersubunit pockets.

It participates in protein degradation; proteasomal Pup-dependent pathway. Functionally, ATPase which is responsible for recognizing, binding, unfolding and translocation of pupylated proteins into the bacterial 20S proteasome core particle. May be essential for opening the gate of the 20S proteasome via an interaction with its C-terminus, thereby allowing substrate entry and access to the site of proteolysis. Thus, the C-termini of the proteasomal ATPase may function like a 'key in a lock' to induce gate opening and therefore regulate proteolysis. The protein is Proteasome-associated ATPase of Mycolicibacterium vanbaalenii (strain DSM 7251 / JCM 13017 / BCRC 16820 / KCTC 9966 / NRRL B-24157 / PYR-1) (Mycobacterium vanbaalenii).